The following is a 482-amino-acid chain: D-inositol 3-phosphate glycosyltransferase (482 aa).

His63 provides a ligand contact to 1D-myo-inositol 3-phosphate. UDP-N-acetyl-alpha-D-glucosamine contacts are provided by residues 69 to 70 and Gly77; that span reads QP. Residues 74-79, Lys132, Tyr165, Thr189, and Arg209 each bind 1D-myo-inositol 3-phosphate; that span reads DAGGMN. The UDP-N-acetyl-alpha-D-glucosamine site is built by Arg289, Lys294, and Gln355. Tyr364, Arg365, and Ala367 together coordinate Mg(2+). Positions 377 and 385 each coordinate UDP-N-acetyl-alpha-D-glucosamine. A Mg(2+)-binding site is contributed by Thr391.

This sequence belongs to the glycosyltransferase group 1 family. MshA subfamily. In terms of assembly, homodimer.

It carries out the reaction 1D-myo-inositol 3-phosphate + UDP-N-acetyl-alpha-D-glucosamine = 1D-myo-inositol 2-acetamido-2-deoxy-alpha-D-glucopyranoside 3-phosphate + UDP + H(+). Catalyzes the transfer of a N-acetyl-glucosamine moiety to 1D-myo-inositol 3-phosphate to produce 1D-myo-inositol 2-acetamido-2-deoxy-glucopyranoside 3-phosphate in the mycothiol biosynthesis pathway. This chain is D-inositol 3-phosphate glycosyltransferase, found in Salinispora tropica (strain ATCC BAA-916 / DSM 44818 / JCM 13857 / NBRC 105044 / CNB-440).